Consider the following 594-residue polypeptide: DEAD-box ATP-dependent RNA helicase 25 (594 aa).

2 disordered regions span residues Arg56–Leu80 and Gly92–Ser121. A Q motif motif is present at residues Thr126–Glu154. In terms of domain architecture, Helicase ATP-binding spans Leu157–Phe340. Ala170 to Thr177 contributes to the ATP binding site. The DEAD box motif lies at Asp288–Asp291. In terms of domain architecture, Helicase C-terminal spans Ile370–Val520.

This sequence belongs to the DEAD box helicase family.

The catalysed reaction is ATP + H2O = ADP + phosphate + H(+). The sequence is that of DEAD-box ATP-dependent RNA helicase 25 from Oryza sativa subsp. japonica (Rice).